The following is a 116-amino-acid chain: Nucleoid-associated protein PMM0020 (116 aa).

The span at 87–98 (ESSTTTMKERMN) shows a compositional bias: basic and acidic residues. The disordered stretch occupies residues 87–116 (ESSTTTMKERMNDLTGGLNLNLPGLDNNDS). A compositionally biased stretch (low complexity) spans 99-116 (DLTGGLNLNLPGLDNNDS).

This sequence belongs to the YbaB/EbfC family. As to quaternary structure, homodimer.

The protein resides in the cytoplasm. The protein localises to the nucleoid. Its function is as follows. Binds to DNA and alters its conformation. May be involved in regulation of gene expression, nucleoid organization and DNA protection. This is Nucleoid-associated protein PMM0020 from Prochlorococcus marinus subsp. pastoris (strain CCMP1986 / NIES-2087 / MED4).